The primary structure comprises 307 residues: Methionyl-tRNA formyltransferase (307 aa).

109-112 (SMLP) provides a ligand contact to (6S)-5,6,7,8-tetrahydrofolate.

This sequence belongs to the Fmt family.

It catalyses the reaction L-methionyl-tRNA(fMet) + (6R)-10-formyltetrahydrofolate = N-formyl-L-methionyl-tRNA(fMet) + (6S)-5,6,7,8-tetrahydrofolate + H(+). Attaches a formyl group to the free amino group of methionyl-tRNA(fMet). The formyl group appears to play a dual role in the initiator identity of N-formylmethionyl-tRNA by promoting its recognition by IF2 and preventing the misappropriation of this tRNA by the elongation apparatus. In Orientia tsutsugamushi (strain Boryong) (Rickettsia tsutsugamushi), this protein is Methionyl-tRNA formyltransferase.